Consider the following 400-residue polypeptide: Elongation factor Tu (400 aa).

The tr-type G domain occupies 10–209 (KPHVNIGTIG…EVDKYIPTPE (200 aa)). Residues 19–26 (GHVDHGKT) form a G1 region. Residue 19–26 (GHVDHGKT) coordinates GTP. Thr-26 serves as a coordination point for Mg(2+). Residues 60–64 (GITIN) form a G2 region. Residues 81–84 (DCPG) are G3. GTP is bound by residues 81–85 (DCPGH) and 136–139 (NKAD). The segment at 136–139 (NKAD) is G4. The segment at 174–176 (SGL) is G5.

The protein belongs to the TRAFAC class translation factor GTPase superfamily. Classic translation factor GTPase family. EF-Tu/EF-1A subfamily. In terms of assembly, monomer.

The protein resides in the cytoplasm. It catalyses the reaction GTP + H2O = GDP + phosphate + H(+). Functionally, GTP hydrolase that promotes the GTP-dependent binding of aminoacyl-tRNA to the A-site of ribosomes during protein biosynthesis. This Heliobacterium modesticaldum (strain ATCC 51547 / Ice1) protein is Elongation factor Tu.